Reading from the N-terminus, the 212-residue chain is Ras-related protein Rab-43 (212 aa).

25 to 32 (GDASVGKT) is a GTP binding site. The Effector region signature appears at 47–55 (QGSTIGVDF). Ser-49 is subject to Phosphoserine. 73 to 77 (DTAGQ) is a GTP binding site. Thr-82 bears the Phosphothreonine; by LRRK2 mark. Residues 131–134 (NKSD) and 163–164 (AK) each bind GTP. Residue Ser-193 is modified to Phosphoserine. S-geranylgeranyl cysteine attachment occurs at residues Cys-210 and Cys-212. Cys-212 is modified (cysteine methyl ester).

The protein belongs to the small GTPase superfamily. Rab family. Interacts with GDI1, GDI2, CHM and CHML; phosphorylation at Thr-82 disrupts these interactions. In terms of tissue distribution, widely expressed in brain, testis, lung, heart, ovary, colon, kidney, uterus and spleen but not in liver.

The protein resides in the cytoplasmic vesicle. It is found in the phagosome. Its subcellular location is the phagosome membrane. The protein localises to the golgi apparatus. It localises to the trans-Golgi network membrane. The protein resides in the trans-Golgi network. Its function is as follows. The small GTPases Rab are key regulators of intracellular membrane trafficking, from the formation of transport vesicles to their fusion with membranes. Rabs cycle between an inactive GDP-bound form and an active GTP-bound form that is able to recruit to membranes different set of downstream effectors directly responsible for vesicle formation, movement, tethering and fusion. The low intrinsic GTPase activity of RAB43 is activated by USP6NL. Involved in retrograde transport from the endocytic pathway to the Golgi apparatus. Involved in the transport of Shiga toxin from early and recycling endosomes to the trans-Golgi network. Required for the structural integrity of the Golgi complex. Plays a role in the maturation of phagosomes that engulf pathogens, such as S.aureus and M.tuberculosis. The sequence is that of Ras-related protein Rab-43 (RAB43) from Homo sapiens (Human).